The primary structure comprises 163 residues: Transcription elongation factor GreB (163 aa).

Residues 54-76 (GKRRMREIDRRIRFLTKRLEAAV) are a coiled coil.

Belongs to the GreA/GreB family. GreB subfamily.

Functionally, necessary for efficient RNA polymerase transcription elongation past template-encoded arresting sites. The arresting sites in DNA have the property of trapping a certain fraction of elongating RNA polymerases that pass through, resulting in locked ternary complexes. Cleavage of the nascent transcript by cleavage factors such as GreA or GreB allows the resumption of elongation from the new 3'terminus. GreB releases sequences of up to 9 nucleotides in length. This is Transcription elongation factor GreB from Neisseria meningitidis serogroup A / serotype 4A (strain DSM 15465 / Z2491).